The primary structure comprises 367 residues: Glutamate 5-kinase (367 aa).

Lysine 10 lines the ATP pocket. The substrate site is built by serine 50, aspartate 137, and asparagine 149. Residues 169-170 and 211-217 contribute to the ATP site; these read TD and TGGMSTK. A PUA domain is found at 275 to 353; that stretch reads AGEITVDDGA…QQIAEILGYE (79 aa).

It belongs to the glutamate 5-kinase family.

It is found in the cytoplasm. It catalyses the reaction L-glutamate + ATP = L-glutamyl 5-phosphate + ADP. It functions in the pathway amino-acid biosynthesis; L-proline biosynthesis; L-glutamate 5-semialdehyde from L-glutamate: step 1/2. Catalyzes the transfer of a phosphate group to glutamate to form L-glutamate 5-phosphate. The polypeptide is Glutamate 5-kinase (Pectobacterium atrosepticum (strain SCRI 1043 / ATCC BAA-672) (Erwinia carotovora subsp. atroseptica)).